The following is a 349-amino-acid chain: Bifunctional protein FolKE (349 aa).

Positions 1-226 (MQTTYLSMGS…LFEIDSSKTD (226 aa)) are 2-amino-4-hydroxy-6-hydroxymethyldihydropteridine pyrophosphokinase. The interval 226-349 (DSIVLIKDIP…KRMEFLESLL (124 aa)) is GTP cyclohydrolase 1.

The protein in the N-terminal section; belongs to the HPPK family. It in the C-terminal section; belongs to the GTP cyclohydrolase I family. In terms of assembly, homomer.

It catalyses the reaction 6-hydroxymethyl-7,8-dihydropterin + ATP = (7,8-dihydropterin-6-yl)methyl diphosphate + AMP + H(+). The catalysed reaction is GTP + H2O = 7,8-dihydroneopterin 3'-triphosphate + formate + H(+). It participates in cofactor biosynthesis; 7,8-dihydroneopterin triphosphate biosynthesis; 7,8-dihydroneopterin triphosphate from GTP: step 1/1. The protein operates within cofactor biosynthesis; tetrahydrofolate biosynthesis; 2-amino-4-hydroxy-6-hydroxymethyl-7,8-dihydropteridine diphosphate from 7,8-dihydroneopterin triphosphate: step 4/4. The sequence is that of Bifunctional protein FolKE (folKE) from Lactococcus lactis subsp. lactis (strain IL1403) (Streptococcus lactis).